The sequence spans 257 residues: uncharacterized protein (257 aa).

Residues 6–26 form a helical membrane-spanning segment; sequence IFWLNLAAIIIISIVVSGDMF.

It belongs to the staphylococcal tandem lipoprotein family.

It is found in the cell membrane. This is an uncharacterized protein from Staphylococcus aureus (strain COL).